A 245-amino-acid chain; its full sequence is 1-(5-phosphoribosyl)-5-[(5-phosphoribosylamino)methylideneamino] imidazole-4-carboxamide isomerase (245 aa).

Aspartate 7 (proton acceptor) is an active-site residue. Aspartate 129 serves as the catalytic Proton donor.

This sequence belongs to the HisA/HisF family.

Its subcellular location is the cytoplasm. It catalyses the reaction 1-(5-phospho-beta-D-ribosyl)-5-[(5-phospho-beta-D-ribosylamino)methylideneamino]imidazole-4-carboxamide = 5-[(5-phospho-1-deoxy-D-ribulos-1-ylimino)methylamino]-1-(5-phospho-beta-D-ribosyl)imidazole-4-carboxamide. Its pathway is amino-acid biosynthesis; L-histidine biosynthesis; L-histidine from 5-phospho-alpha-D-ribose 1-diphosphate: step 4/9. This is 1-(5-phosphoribosyl)-5-[(5-phosphoribosylamino)methylideneamino] imidazole-4-carboxamide isomerase from Shigella flexneri serotype 5b (strain 8401).